Here is a 230-residue protein sequence, read N- to C-terminus: Orotidine 5'-phosphate decarboxylase (230 aa).

Substrate is bound by residues D9, K31, 58–67 (DLKFFDIPNT), T120, R180, Q188, G208, and R209. The active-site Proton donor is K60.

This sequence belongs to the OMP decarboxylase family. Type 1 subfamily. In terms of assembly, homodimer.

It carries out the reaction orotidine 5'-phosphate + H(+) = UMP + CO2. The protein operates within pyrimidine metabolism; UMP biosynthesis via de novo pathway; UMP from orotate: step 2/2. Its function is as follows. Catalyzes the decarboxylation of orotidine 5'-monophosphate (OMP) to uridine 5'-monophosphate (UMP). This is Orotidine 5'-phosphate decarboxylase from Maridesulfovibrio salexigens (strain ATCC 14822 / DSM 2638 / NCIMB 8403 / VKM B-1763) (Desulfovibrio salexigens).